Consider the following 482-residue polypeptide: Catalase easC (482 aa).

His58 is a catalytic residue. Tyr347 lines the heme pocket.

This sequence belongs to the catalase family. It depends on heme as a cofactor.

It participates in alkaloid biosynthesis; ergot alkaloid biosynthesis. Functionally, catalase; part of the gene cluster that mediates the biosynthesis of fungal ergot alkaloid. DmaW catalyzes the first step of ergot alkaloid biosynthesis by condensing dimethylallyl diphosphate (DMAP) and tryptophan to form 4-dimethylallyl-L-tryptophan. The second step is catalyzed by the methyltransferase easF that methylates 4-dimethylallyl-L-tryptophan in the presence of S-adenosyl-L-methionine, resulting in the formation of 4-dimethylallyl-L-abrine. The catalase easC and the FAD-dependent oxidoreductase easE then transform 4-dimethylallyl-L-abrine to chanoclavine-I which is further oxidized by easD in the presence of NAD(+), resulting in the formation of chanoclavine-I aldehyde. Chanoclavine-I aldehyde is the precursor of ergoamides and ergopeptines in Clavicipitaceae, and clavine-type alcaloids such as fumiclavine in Trichocomaceae. However, the metabolites downstream of chanoclavine-I aldehyde in Arthrodermataceae have not been identified yet. The sequence is that of Catalase easC from Arthroderma otae (strain ATCC MYA-4605 / CBS 113480) (Microsporum canis).